The sequence spans 1112 residues: MIAVSFKCRCQILRRLTKDESPYTKSASQTKPPDGALAVRRQSIPEEFKGSTVVELMKKEGTTLGLTVSGGIDKDGKPRVSNLRQGGIAARSDQLDVGDYIKAVNGINLAKFRHDEIISLLKNVGERVVLEVEYELPPVSIQGSSVMFRTVEVTLHKEGNTFGFVIRGGAHDDRNKSRPVVITCVRPGGPADREGTIKPGDRLLSVDGIRLLGTTHAEAMSILKQCGQEATLLIEYDVSVMDSVATASGPLLVEVAKTPGASLGVALTTSVCCNKQVIVIDKIKSASIADRCGALHVGDHILSIDGTSMEYCTLAEATQFLANTTDQVKLEILPHHQTRLALKGPDHVKIQRSDRQLPWDPWASSQCSVHTNHHHNPHHPDHCRVPALGFPKALTPNSPPAMVSSSSPTSMSAYSLSSLNMGTLPRSLYSTSPRGTMMRRRLKKKDFKSSLSLASSTVGLAGQVVHTETTEVVLTADPVTGFGIQLQGSVFATETLSSPPLISYIEADSPAERCGVLQIGDRVMAINGIPTEDSTFEEANQLLRDSSITSKVTLEIEFDVAESVIPSSGTFHVKLPKKHSVELGITISSPSSRKPGDPLVISDIKKGSVAHRTGTLELGDKLLAIDNIRLDSCSMEDAVQILQQCEDLVKLKIRKDEDNSDEQESSGAIIYTVELKRYGGPLGITISGTEEPFDPIIISSLTKGGLAERTGAIHIGDRILAINSSSLKGKPLSEAIHLLQMAGETVTLKIKKQTDAQPASSPKKLPIPSHSSDLGDGEEDPSPIQRPGKLSDVYPSTVPSVDSAVDSWDGSGIDARYGSQGTTFQTSGYNFNTYDWRSPKKRASLSPVPKPRSQTYPDVGLSNEDWDRSTASGFAGASDSADAEQEENFWSQALEDLETCGQSGILRELEATIMSGSTMSLNHEAPTARSQLGRQASFQERSNSRPHYSQTTRSNTLPSDVGRKSVTLRKMKQEIKEIMSPTPVELHKVTLYKDSGMEDFGFSVADGLLEKGVYVKNIRPAGPGDLGGLKPYDRLLQVNHVRTRDFDCCLVVPLIAESGNKLDLVISRNPLASQKSIEQPALPSDWSEQNSAFFQQPSHGGNLETREPTNTL.

Residue Ser43 is modified to Phosphoserine. PDZ domains follow at residues 53–136 (VVEL…EYEL), 150–238 (TVEV…EYDV), 252–336 (LVEV…LPHH), 471–560 (EVVL…EFDV), 572–657 (HVKL…RKDE), and 672–754 (TVEL…KKQT). Disordered stretches follow at residues 752–796 (KQTD…VYPS), 841–886 (KRAS…AEQE), and 922–963 (NHEA…DVGR). Positions 869-880 (STASGFAGASDS) are enriched in low complexity. Residues 928-958 (ARSQLGRQASFQERSNSRPHYSQTTRSNTLP) show a composition bias toward polar residues. Residues 988–1070 (KVTLYKDSGM…KLDLVISRNP (83 aa)) enclose the PDZ 7 domain. The disordered stretch occupies residues 1077–1112 (IEQPALPSDWSEQNSAFFQQPSHGGNLETREPTNTL). Positions 1086-1099 (WSEQNSAFFQQPSH) are enriched in polar residues.

In terms of assembly, interacts with EFNB1, EPHA7, EPHB2, EFNB3, KIF5A, KIF5C, KIF5B and the C-terminal tail of PRLHR. Forms a ternary complex with GRIA2 and CSPG4. Can form homomultimers or heteromultimers with GRIP2. Interacts with GRIA2, GRIA3, GRIPAP1/GRASP1, PPFIA1, PPFIA4, FRAS1, PLCD4, PTPRF and liprins-alpha. Interacts with ATAD1 in an ATP-dependent manner. ATAD1-catalyzed ATP hydrolysis disrupts binding to ATAD1 and to GRIA2 and leads to AMPAR complex disassembly. Interacts with SLC30A9. Interacts with BUD23. Forms a complex with NSG1, GRIA2 and STX12; controls the intracellular fate of AMPAR and the endosomal sorting of the GRIA2 subunit toward recycling and membrane targeting. Interacts with NSG1. As to expression, expressed in brain, testis and retina. In brain highly expressed in the olfactory bulb, cortex and hippocampus and lower level in thalamus, cerebellum and spinal cord. In brain it is found in the perikaryon, dendrites, dendritic shafts, dendritic spines and, excitatory and inhibitory synapses of neurons. In retina, it is most abundant in the plexiform layers than in perikarya.

It is found in the cytoplasmic vesicle. The protein localises to the perikaryon. Its subcellular location is the cell projection. It localises to the dendrite. The protein resides in the cytoplasm. It is found in the endomembrane system. The protein localises to the postsynaptic cell membrane. Its subcellular location is the postsynaptic density. It localises to the endoplasmic reticulum membrane. In terms of biological role, may play a role as a localized scaffold for the assembly of a multiprotein signaling complex and as mediator of the trafficking of its binding partners at specific subcellular location in neurons. Through complex formation with NSG1, GRIA2 and STX12 controls the intracellular fate of AMPAR and the endosomal sorting of the GRIA2 subunit toward recycling and membrane targeting. The chain is Glutamate receptor-interacting protein 1 (Grip1) from Rattus norvegicus (Rat).